The sequence spans 361 residues: tRNA-specific 2-thiouridylase MnmA (361 aa).

ATP is bound by residues 8–15 (AMSGGVDS) and methionine 35. Residues 95-97 (NPD) form an interaction with target base in tRNA region. The active-site Nucleophile is cysteine 100. Cysteine 100 and cysteine 196 are disulfide-bonded. Glycine 124 lines the ATP pocket. Positions 146 to 148 (KDQ) are interaction with tRNA. Cysteine 196 (cysteine persulfide intermediate) is an active-site residue. Residues 303-304 (RY) are interaction with tRNA.

The protein belongs to the MnmA/TRMU family.

Its subcellular location is the cytoplasm. The catalysed reaction is S-sulfanyl-L-cysteinyl-[protein] + uridine(34) in tRNA + AH2 + ATP = 2-thiouridine(34) in tRNA + L-cysteinyl-[protein] + A + AMP + diphosphate + H(+). Its function is as follows. Catalyzes the 2-thiolation of uridine at the wobble position (U34) of tRNA, leading to the formation of s(2)U34. This chain is tRNA-specific 2-thiouridylase MnmA, found in Chlamydia felis (strain Fe/C-56) (Chlamydophila felis).